Consider the following 622-residue polypeptide: Chaperone protein HscA homolog (622 aa).

It belongs to the heat shock protein 70 family.

Chaperone involved in the maturation of iron-sulfur cluster-containing proteins. Has a low intrinsic ATPase activity which is markedly stimulated by HscB. The chain is Chaperone protein HscA homolog from Azoarcus sp. (strain BH72).